We begin with the raw amino-acid sequence, 478 residues long: Proline--tRNA ligase (478 aa).

It belongs to the class-II aminoacyl-tRNA synthetase family. ProS type 3 subfamily. In terms of assembly, homodimer.

The protein localises to the cytoplasm. The enzyme catalyses tRNA(Pro) + L-proline + ATP = L-prolyl-tRNA(Pro) + AMP + diphosphate. Functionally, catalyzes the attachment of proline to tRNA(Pro) in a two-step reaction: proline is first activated by ATP to form Pro-AMP and then transferred to the acceptor end of tRNA(Pro). The polypeptide is Proline--tRNA ligase (Methanococcoides burtonii (strain DSM 6242 / NBRC 107633 / OCM 468 / ACE-M)).